Reading from the N-terminus, the 282-residue chain is Armadillo repeat-containing protein 1 (282 aa).

At methionine 1 the chain carries N-acetylmethionine. Residues 39–81 (GCLPGLILSMDHPNPPVVHSALLALRYLAECRANREKMKGELG) form an ARM repeat. Threonine 137 carries the phosphothreonine modification. 4 positions are modified to phosphoserine: serine 189, serine 246, serine 260, and serine 267. The tract at residues 239-261 (DYLPEDESPTKEQDKAVSRVGSH) is disordered. A compositionally biased stretch (basic and acidic residues) spans 246-255 (SPTKEQDKAV).

As to quaternary structure, interacts with mitochondrial contact site and cristae organizing system (MICOS) complex components IMMT/MIC60 and MICOS10/MIC10. Interacts with mitochondrial outer membrane sorting assembly machinery (SAM) complex components SAMM50 and MTX1.

It is found in the cytoplasm. Its subcellular location is the mitochondrion. The protein localises to the mitochondrion outer membrane. In terms of biological role, in association with mitochondrial contact site and cristae organizing system (MICOS) complex components and mitochondrial outer membrane sorting assembly machinery (SAM) complex components may regulate mitochondrial dynamics playing a role in determining mitochondrial length, distribution and motility. This is Armadillo repeat-containing protein 1 (ARMC1) from Pongo abelii (Sumatran orangutan).